The primary structure comprises 395 residues: Elongation factor Tu (395 aa).

The region spanning 10–204 is the tr-type G domain; that stretch reads KEHANIGTIG…AVDDFIPTPE (195 aa). The interval 19–26 is G1; that stretch reads GHVDHGKT. Position 19–26 (19–26) interacts with GTP; that stretch reads GHVDHGKT. T26 is a binding site for Mg(2+). The segment at 60-64 is G2; sequence GITIN. The interval 81–84 is G3; it reads DCPG. GTP-binding positions include 81-85 and 136-139; these read DCPGH and NKVD. Residues 136–139 are G4; that stretch reads NKVD. The tract at residues 174–176 is G5; it reads SAL.

The protein belongs to the TRAFAC class translation factor GTPase superfamily. Classic translation factor GTPase family. EF-Tu/EF-1A subfamily. Monomer.

The protein localises to the cytoplasm. It catalyses the reaction GTP + H2O = GDP + phosphate + H(+). Functionally, GTP hydrolase that promotes the GTP-dependent binding of aminoacyl-tRNA to the A-site of ribosomes during protein biosynthesis. This Staphylococcus saprophyticus subsp. saprophyticus (strain ATCC 15305 / DSM 20229 / NCIMB 8711 / NCTC 7292 / S-41) protein is Elongation factor Tu.